A 187-amino-acid polypeptide reads, in one-letter code: Glutathione peroxidase 7 (187 aa).

The N-terminal stretch at methionine 1–alanine 19 is a signal peptide. Cysteine 57 is a catalytic residue.

The protein belongs to the glutathione peroxidase family. Expressed in esophageal epithelial cells; expression is up-regulated after exposure to acidic bile acids.

It localises to the secreted. The enzyme catalyses 2 glutathione + H2O2 = glutathione disulfide + 2 H2O. In terms of biological role, it protects esophageal epithelia from hydrogen peroxide-induced oxidative stress. It suppresses acidic bile acid-induced reactive oxygen species (ROS) and protects against oxidative DNA damage and double-strand breaks. The polypeptide is Glutathione peroxidase 7 (GPX7) (Homo sapiens (Human)).